The following is a 408-amino-acid chain: 2-acyl-4-prenylphloroglucinol 6-prenyltransferase, chloroplastic (408 aa).

A chloroplast-targeting transit peptide spans Met-1–Cys-46. The next 9 membrane-spanning stretches (helical) occupy residues Pro-119 to Lys-139, Trp-146 to Ile-166, Ser-193 to Ile-213, Cys-217 to Val-237, Ile-257 to Phe-277, Pro-281 to Lys-301, Ile-326 to Ile-346, Tyr-355 to Leu-375, and Tyr-388 to Thr-408.

It belongs to the UbiA prenyltransferase family. As to quaternary structure, homo- and heteromer. Interacts with PT1L, forming a functional metabolon. Mg(2+) is required as a cofactor. As to expression, expressed in trichomes.

The protein localises to the plastid. It localises to the chloroplast membrane. The catalysed reaction is a 2-acyl-4-prenylphloroglucinol + dimethylallyl diphosphate = a 2-acyl-4,6-diprenylphloroglucinol + diphosphate. It carries out the reaction a 2-acyl-4,6-diprenylphloroglucinol + dimethylallyl diphosphate = a 2-acyl-4,6,6-triprenylphloroglucinol + diphosphate. It functions in the pathway secondary metabolite biosynthesis. Functionally, involved in the biosynthesis of prenylated phenolics natural products which contribute to the bitter taste of beer and display broad biological activities. Catalyzes the two last prenylation steps in the beta-bitter acid pathway. Uses dimethylallyl diphosphate (DMAPP) as the prenyl donor. The chain is 2-acyl-4-prenylphloroglucinol 6-prenyltransferase, chloroplastic from Humulus lupulus (European hop).